Here is an 86-residue protein sequence, read N- to C-terminus: Small ribosomal subunit protein uS17 (86 aa).

Belongs to the universal ribosomal protein uS17 family. As to quaternary structure, part of the 30S ribosomal subunit.

One of the primary rRNA binding proteins, it binds specifically to the 5'-end of 16S ribosomal RNA. This Halorhodospira halophila (strain DSM 244 / SL1) (Ectothiorhodospira halophila (strain DSM 244 / SL1)) protein is Small ribosomal subunit protein uS17.